We begin with the raw amino-acid sequence, 503 residues long: Aspartyl/glutamyl-tRNA(Asn/Gln) amidotransferase subunit B (503 aa).

This sequence belongs to the GatB/GatE family. GatB subfamily. In terms of assembly, heterotrimer of A, B and C subunits.

The catalysed reaction is L-glutamyl-tRNA(Gln) + L-glutamine + ATP + H2O = L-glutaminyl-tRNA(Gln) + L-glutamate + ADP + phosphate + H(+). It catalyses the reaction L-aspartyl-tRNA(Asn) + L-glutamine + ATP + H2O = L-asparaginyl-tRNA(Asn) + L-glutamate + ADP + phosphate + 2 H(+). Functionally, allows the formation of correctly charged Asn-tRNA(Asn) or Gln-tRNA(Gln) through the transamidation of misacylated Asp-tRNA(Asn) or Glu-tRNA(Gln) in organisms which lack either or both of asparaginyl-tRNA or glutaminyl-tRNA synthetases. The reaction takes place in the presence of glutamine and ATP through an activated phospho-Asp-tRNA(Asn) or phospho-Glu-tRNA(Gln). This Cereibacter sphaeroides (strain ATCC 17025 / ATH 2.4.3) (Rhodobacter sphaeroides) protein is Aspartyl/glutamyl-tRNA(Asn/Gln) amidotransferase subunit B.